An 84-amino-acid polypeptide reads, in one-letter code: Cytochrome c oxidase subunit 12, mitochondrial (84 aa).

Residues 27–70 (TKHCWQNYVDYHKCILAKGEDFAPCRQFWLAYRSLCPSGWYQRW) form the CHCH domain. Positions 30–40 (CWQNYVDYHKC) match the Cx9C motif motif. 2 disulfide bridges follow: C30–C62 and C40–C51. A Cx10C motif motif is present at residues 51–62 (CRQFWLAYRSLC).

The protein belongs to the cytochrome c oxidase subunit 6B family. Component of the cytochrome c oxidase (complex IV, CIV), a multisubunit enzyme composed of 11 subunits. The complex is composed of a catalytic core of 3 subunits Cox1, Cox2 and Cox3, encoded in the mitochondrial DNA, and 8 supernumerary subunits Cox4, Cox5a/Cox5, Cox6, Cox7, Cox8, Cox7a/Cox9, Cox6b/Cox12 and Cox6a/Cox13, which are encoded in the nuclear genome. The complex exists as a monomer or a dimer and forms respiratory supercomplexes (SCs) in the inner mitochondrial membrane with NADH-ubiquinone oxidoreductase (complex I, CI) and ubiquinol-cytochrome c oxidoreductase (cytochrome b-c1 complex, complex III, CIII), resulting in various different assemblies (supercomplexes I(1)IV(1), I(1)III(3)IV(2), III(2)IV(1) and III(2)IV(2) as well as larger supercomplexes of compositions like I(1)III(2)IV(5-6)).

The protein localises to the mitochondrion inner membrane. It functions in the pathway energy metabolism; oxidative phosphorylation. Component of the cytochrome c oxidase, the last enzyme in the mitochondrial electron transport chain which drives oxidative phosphorylation. The respiratory chain contains 3 multisubunit complexes succinate dehydrogenase (complex II, CII), ubiquinol-cytochrome c oxidoreductase (cytochrome b-c1 complex, complex III, CIII) and cytochrome c oxidase (complex IV, CIV), that cooperate to transfer electrons derived from NADH and succinate to molecular oxygen, creating an electrochemical gradient over the inner membrane that drives transmembrane transport and the ATP synthase. Cytochrome c oxidase is the component of the respiratory chain that catalyzes the reduction of oxygen to water. Electrons originating from reduced cytochrome c in the intermembrane space (IMS) are transferred via the dinuclear copper A center (CU(A)) of Cox2 and heme A of Cox1 to the active site in Cox1, a binuclear center (BNC) formed by heme A3 and copper B (CU(B)). The BNC reduces molecular oxygen to 2 water molecules using 4 electrons from cytochrome c in the IMS and 4 protons from the mitochondrial matrix. In Neurospora crassa (strain ATCC 24698 / 74-OR23-1A / CBS 708.71 / DSM 1257 / FGSC 987), this protein is Cytochrome c oxidase subunit 12, mitochondrial (cox-13).